The sequence spans 168 residues: Prespore-specific protein A (168 aa).

A signal peptide spans 1–19 (MKFQHTFIALLSLLTYANA). 13 O-linked (GlcNAc) threonine glycosylation sites follow: Thr110, Thr114, Thr116, Thr118, Thr120, Thr122, Thr124, Thr126, Thr128, Thr130, Thr132, Thr134, and Thr138. Tandem repeats lie at residues 116–119 (TPTV), 120–123 (TPTV), and 124–127 (TPTV). The segment at 116–127 (TPTVTPTVTPTV) is 3 X 4 AA tandem repeats of T-P-T-V. A compositionally biased stretch (low complexity) spans 116–131 (TPTVTPTVTPTVTPTP). A disordered region spans residues 116–147 (TPTVTPTVTPTVTPTPTNTPNPTPSQTSTTTG). O-linked (GlcNAc) serine glycosylation is present at Ser140. Gly147 is lipidated: GPI-like-anchor amidated glycine. The propeptide at 148 to 168 (SASTVVASLSLIIFSMILSLC) is removed in mature form.

Belongs to the ponticulin family. In terms of processing, O-glycosylated in the repeat region. The oligosaccharides contain N-acetylglucosamine and fucose as the major constituents. The GPI-like-anchor contains a phosphoceramide group, rather than a phosphatidyl group.

The protein resides in the cell membrane. Its function is as follows. May bind F-actin and nucleates actin assembly. The sequence is that of Prespore-specific protein A (pspA) from Dictyostelium discoideum (Social amoeba).